Reading from the N-terminus, the 206-residue chain is Small ribosomal subunit protein uS5 (206 aa).

Residues 1 to 42 (MENKTEVVVAENANNQTQPERKKFDRKPNRRPQGPKQFQKDD) are disordered. Residues 43–106 (FEEKVVTIRR…KEAKKNLIRV (64 aa)) form the S5 DRBM domain.

Belongs to the universal ribosomal protein uS5 family. In terms of assembly, part of the 30S ribosomal subunit. Contacts proteins S4 and S8.

Its function is as follows. With S4 and S12 plays an important role in translational accuracy. In terms of biological role, located at the back of the 30S subunit body where it stabilizes the conformation of the head with respect to the body. This Mesoplasma florum (strain ATCC 33453 / NBRC 100688 / NCTC 11704 / L1) (Acholeplasma florum) protein is Small ribosomal subunit protein uS5.